The primary structure comprises 424 residues: Testican-2 (424 aa).

The signal sequence occupies residues 1–22; the sequence is MRAPGCGRLVLPLLLLAAAALA. Position 72 is a phosphoserine; by FAM20C (serine 72). 5 disulfide bridges follow: cysteine 90/cysteine 101, cysteine 95/cysteine 111, cysteine 136/cysteine 166, cysteine 139/cysteine 159, and cysteine 148/cysteine 180. The 53-residue stretch at 130–182 folds into the Kazal-like domain; sequence GNKDSICKPCHMAQLASVCGSDGHTYSSVCKLEQQACLSSKQLAVRCEGPCPC. N-linked (GlcNAc...) asparagine glycosylation is present at asparagine 225. The Thyroglobulin type-1 domain maps to 310–376; that stretch reads KPPCLAELER…GTRTHGSPDC (67 aa). 3 cysteine pairs are disulfide-bonded: cysteine 313–cysteine 337, cysteine 348–cysteine 355, and cysteine 357–cysteine 376. O-linked (Xyl...) (glycosaminoglycan) serine glycans are attached at residues serine 383 and serine 388. Positions 387–424 are disordered; the sequence is GSGVGWEDEEEKETEEAGEEAEEEEGEAGEADDGGYIW. A compositionally biased stretch (acidic residues) spans 392–424; it reads WEDEEEKETEEAGEEAEEEEGEAGEADDGGYIW.

Contains chondroitin sulfate and heparan sulfate O-linked oligosaccharides. Highly expressed in brain. Also found in lung and testis.

It is found in the secreted. It localises to the extracellular space. Its subcellular location is the extracellular matrix. Functionally, may participate in diverse steps of neurogenesis. Binds calcium. The protein is Testican-2 (SPOCK2) of Homo sapiens (Human).